The primary structure comprises 190 residues: MSGLRPALSTFLFLLLITGGVYPLLTTALGQWWFPWQANGSLIREGDTVRGSALIGQNFTGNGYFHGRPSATAEMPYNPQASGGSNLAVSNPELDKLIAARVAALRAANPDASASVPVELVTASASGLDNNITPQAAAWQIPRVAKARNLSVEQLTQLIAKYSQQPLVNYIGQPVVNIVELNLALDKLDE.

The helical transmembrane segment at 10 to 30 (TFLFLLLITGGVYPLLTTALG) threads the bilayer.

The protein belongs to the KdpC family. The system is composed of three essential subunits: KdpA, KdpB and KdpC.

The protein resides in the cell inner membrane. In terms of biological role, part of the high-affinity ATP-driven potassium transport (or Kdp) system, which catalyzes the hydrolysis of ATP coupled with the electrogenic transport of potassium into the cytoplasm. This subunit acts as a catalytic chaperone that increases the ATP-binding affinity of the ATP-hydrolyzing subunit KdpB by the formation of a transient KdpB/KdpC/ATP ternary complex. This chain is Potassium-transporting ATPase KdpC subunit, found in Escherichia coli (strain SMS-3-5 / SECEC).